The primary structure comprises 537 residues: 2-isopropylmalate synthase (537 aa).

The region spanning 8–269 (VLIFDTTLRD…YFNGYLGRAE (262 aa)) is the Pyruvate carboxyltransferase domain. Aspartate 17, histidine 208, histidine 210, and asparagine 244 together coordinate Mn(2+). A regulatory domain region spans residues 408–537 (QLAGVQVSCG…QRAPLPAPAL (130 aa)).

The protein belongs to the alpha-IPM synthase/homocitrate synthase family. LeuA type 1 subfamily. As to quaternary structure, homodimer. Requires Mn(2+) as cofactor.

The protein localises to the cytoplasm. The catalysed reaction is 3-methyl-2-oxobutanoate + acetyl-CoA + H2O = (2S)-2-isopropylmalate + CoA + H(+). It participates in amino-acid biosynthesis; L-leucine biosynthesis; L-leucine from 3-methyl-2-oxobutanoate: step 1/4. Its function is as follows. Catalyzes the condensation of the acetyl group of acetyl-CoA with 3-methyl-2-oxobutanoate (2-ketoisovalerate) to form 3-carboxy-3-hydroxy-4-methylpentanoate (2-isopropylmalate). The polypeptide is 2-isopropylmalate synthase (Synechococcus sp. (strain RCC307)).